Reading from the N-terminus, the 133-residue chain is Small ribosomal subunit protein uS8 (133 aa).

The disordered stretch occupies residues 1 to 29; sequence MANHDPISDMLTRIRNASEKRHETTRIPA. Residues 16–25 show a composition bias toward basic and acidic residues; that stretch reads NASEKRHETT.

It belongs to the universal ribosomal protein uS8 family. Part of the 30S ribosomal subunit. Contacts proteins S5 and S12.

Its function is as follows. One of the primary rRNA binding proteins, it binds directly to 16S rRNA central domain where it helps coordinate assembly of the platform of the 30S subunit. This is Small ribosomal subunit protein uS8 from Prochlorococcus marinus (strain MIT 9211).